We begin with the raw amino-acid sequence, 372 residues long: GDP-mannose 4,6-dehydratase (372 aa).

Residues 8-13, 63-64, 85-89, and tyrosine 100 contribute to the NADP(+) site; these read GITGQD, DL, and LGAQS. Residue threonine 132 is part of the active site. Residues glutamate 134 and tyrosine 156 each act as nucleophile in the active site. Residues lysine 160, histidine 186, and arginine 191 each contribute to the NADP(+) site.

It belongs to the NAD(P)-dependent epimerase/dehydratase family. GDP-mannose 4,6-dehydratase subfamily. Requires NADP(+) as cofactor.

It catalyses the reaction GDP-alpha-D-mannose = GDP-4-dehydro-alpha-D-rhamnose + H2O. It participates in bacterial outer membrane biogenesis; LPS O-antigen biosynthesis. The protein operates within nucleotide-sugar biosynthesis; GDP-L-fucose biosynthesis via de novo pathway; GDP-L-fucose from GDP-alpha-D-mannose: step 1/2. Catalyzes the conversion of GDP-D-mannose to GDP-4-dehydro-6-deoxy-D-mannose. This Yersinia enterocolitica serotype O:8 / biotype 1B (strain NCTC 13174 / 8081) protein is GDP-mannose 4,6-dehydratase.